A 288-amino-acid chain; its full sequence is Syntaxin-1A (288 aa).

Basic and acidic residues predominate over residues 1 to 13 (MKDRTQELRTAKD). The segment at 1–20 (MKDRTQELRTAKDSDDDDDV) is disordered. The Cytoplasmic portion of the chain corresponds to 1–265 (MKDRTQELRT…KYQSKARRKK (265 aa)). Phosphoserine occurs at positions 14, 64, and 95. Residues 68–109 (DEKTKEELEELMSDIKKTANKVRSKLKSIEQSIEQEEGLNRS) are a coiled coil. Ser-188 carries the post-translational modification Phosphoserine; by DAPK1. Positions 192 to 254 (LSEIETRHSE…ERAVSDTKKA (63 aa)) constitute a t-SNARE coiled-coil homology domain. Residues Lys-252, Lys-253, and Lys-256 each participate in a glycyl lysine isopeptide (Lys-Gly) (interchain with G-Cter in SUMO) cross-link. The chain crosses the membrane as a helical; Anchor for type IV membrane protein span at residues 266–288 (IMIIICCVILGIIIASTIGGIFG).

This sequence belongs to the syntaxin family. As to quaternary structure, part of the SNARE core complex containing SNAP25, VAMP2 and STX1A; this complex constitutes the basic catalytic machinery of the complex neurotransmitter release apparatus. The SNARE complex interacts with CPLX1. Interacts with STXBP1. The interaction with STXBP1 promotes assembly of the SNARE complex. Interacts (via C-terminus) with KCNB1 (via C-terminus); the interaction increases in a calcium-dependent manner and induces a pore-independent enhancement of exocytosis in neuroendocrine cells, chromaffin cells, pancreatic beta cells and from the soma of dorsal root ganglia (DRG) neurons. Interacts with SYTL4. Interacts with STXBP6. Interacts with PLCL1 (via C2 domain). Interacts with OTOF. Interacts with LGI3. Interacts (via the H3 domain) with SLC6A4 (via the N-terminus); this interaction regulates SLC4A6 channel conductance in thalamocortical neurons. Interacts with SYT6 and SYT8; the interaction is Ca(2+)-dependent. Interacts with VAMP8. Interacts with SNAP23. Interacts with VAPA and SYBU. Interacts with PRRT2. Interacts with SEPT8. Interacts with STXBP5L. Interacts with synaptotagmin-1/SYT1. Interacts with SEPTIN5; in the cerebellar cortex. Interacts with SEPTIN4; in the striatum. In terms of processing, phosphorylated by CK2. Phosphorylation at Ser-188 by DAPK1 significantly decreases its interaction with STXBP1. (Microbial infection) Targeted and hydrolyzed by C.botulinum neurotoxin type C (BoNT/C), which hydrolyzes the 253-Lys-|-Ala-254 bond. Cleavage inhibits neurotransmitter release. Post-translationally, phosphorylated by CK2. Phosphorylation at Ser-188 by DAPK1 significantly decreases its interaction with STXBP1. In terms of processing, sumoylated, sumoylation is required for regulation of synaptic vesicle endocytosis. As to expression, expressed predominantly in cerebral cortex, hippocampus, cerebellum, adrenal medulla and retina with weak expression detected in non-neuronal tissues.

It is found in the cytoplasmic vesicle. The protein localises to the secretory vesicle. Its subcellular location is the synaptic vesicle membrane. It localises to the cell membrane. The protein resides in the synapse. It is found in the synaptosome. Its function is as follows. Plays an essential role in hormone and neurotransmitter calcium-dependent exocytosis and endocytosis. Part of the SNARE (Soluble NSF Attachment Receptor) complex composed of SNAP25, STX1A and VAMP2 which mediates the fusion of synaptic vesicles with the presynaptic plasma membrane. STX1A and SNAP25 are localized on the plasma membrane while VAMP2 resides in synaptic vesicles. The pairing of the three SNAREs from the N-terminal SNARE motifs to the C-terminal anchors leads to the formation of the SNARE complex, which brings membranes into close proximity and results in final fusion. Participates in the calcium-dependent regulation of acrosomal exocytosis in sperm. Also plays an important role in the exocytosis of hormones such as insulin or glucagon-like peptide 1 (GLP-1). The protein is Syntaxin-1A (Stx1a) of Rattus norvegicus (Rat).